A 439-amino-acid chain; its full sequence is Secreted RxLR effector protein 117 (439 aa).

Residues 1-21 (MRGAYYVLAALLVVASSQIAA) form the signal peptide. The RxLR-dEER motif lies at 48-65 (RYLRGGHDVHDDSANEER).

Belongs to the RxLR effector family.

It localises to the secreted. Its subcellular location is the host nucleus. Functionally, secreted effector that acts as an elicitor that induces cell death in host plant cells. This chain is Secreted RxLR effector protein 117, found in Plasmopara viticola (Downy mildew of grapevine).